Here is a 475-residue protein sequence, read N- to C-terminus: Ribosomal protein uS12 methylthiotransferase RimO (475 aa).

The region spanning 5 to 114 is the MTTase N-terminal domain; sequence RTVRLIRLGC…IAQRLEDVLA (110 aa). Residues Cys-14, Cys-49, Cys-78, Cys-174, Cys-178, and Cys-181 each contribute to the [4Fe-4S] cluster site. Residues 160–390 enclose the Radical SAM core domain; the sequence is LDDSPVAPLK…AGIAEEVTAD (231 aa). One can recognise a TRAM domain in the interval 393–461; sequence RARLGETVDV…GVDFLAAPVT (69 aa).

It belongs to the methylthiotransferase family. RimO subfamily. [4Fe-4S] cluster is required as a cofactor.

It is found in the cytoplasm. The enzyme catalyses L-aspartate(89)-[ribosomal protein uS12]-hydrogen + (sulfur carrier)-SH + AH2 + 2 S-adenosyl-L-methionine = 3-methylsulfanyl-L-aspartate(89)-[ribosomal protein uS12]-hydrogen + (sulfur carrier)-H + 5'-deoxyadenosine + L-methionine + A + S-adenosyl-L-homocysteine + 2 H(+). Catalyzes the methylthiolation of an aspartic acid residue of ribosomal protein uS12. The chain is Ribosomal protein uS12 methylthiotransferase RimO from Acidothermus cellulolyticus (strain ATCC 43068 / DSM 8971 / 11B).